The primary structure comprises 266 residues: Small ribosomal subunit protein uS2 (266 aa).

The segment at 229–254 (RTSDKEADTTTEEVAQEEVTDTKADE) is disordered. A compositionally biased stretch (acidic residues) spans 237 to 247 (TTTEEVAQEEV).

It belongs to the universal ribosomal protein uS2 family.

In Flavobacterium psychrophilum (strain ATCC 49511 / DSM 21280 / CIP 103535 / JIP02/86), this protein is Small ribosomal subunit protein uS2.